A 27-amino-acid polypeptide reads, in one-letter code: Trypsin inhibitor 5 (27 aa).

3 disulfides stabilise this stretch: Cys-1–Cys-18, Cys-8–Cys-20, and Cys-14–Cys-26.

It localises to the secreted. Functionally, inhibits trypsin. The polypeptide is Trypsin inhibitor 5 (Sechium edule (Chayote)).